A 635-amino-acid polypeptide reads, in one-letter code: Threonine--tRNA ligase (635 aa).

Positions 1-58 (MIRVICNNETVELPKGATAADFASKIKNSHYFAGVVINDQIKDLSTTLNEGDTLRFVT) constitute a TGS domain. Residues 237–528 (DHRVLGAKLD…LIEHFKGKFP (292 aa)) form a catalytic region. Positions 328, 379, and 505 each coordinate Zn(2+).

Belongs to the class-II aminoacyl-tRNA synthetase family. Homodimer. Zn(2+) is required as a cofactor.

It is found in the cytoplasm. The catalysed reaction is tRNA(Thr) + L-threonine + ATP = L-threonyl-tRNA(Thr) + AMP + diphosphate + H(+). Its function is as follows. Catalyzes the attachment of threonine to tRNA(Thr) in a two-step reaction: L-threonine is first activated by ATP to form Thr-AMP and then transferred to the acceptor end of tRNA(Thr). Also edits incorrectly charged L-seryl-tRNA(Thr). The protein is Threonine--tRNA ligase of Chlamydia caviae (strain ATCC VR-813 / DSM 19441 / 03DC25 / GPIC) (Chlamydophila caviae).